The sequence spans 284 residues: 2-dehydro-3-deoxyphosphooctonate aldolase (284 aa).

It belongs to the KdsA family.

It localises to the cytoplasm. The enzyme catalyses D-arabinose 5-phosphate + phosphoenolpyruvate + H2O = 3-deoxy-alpha-D-manno-2-octulosonate-8-phosphate + phosphate. It functions in the pathway carbohydrate biosynthesis; 3-deoxy-D-manno-octulosonate biosynthesis; 3-deoxy-D-manno-octulosonate from D-ribulose 5-phosphate: step 2/3. Its pathway is bacterial outer membrane biogenesis; lipopolysaccharide biosynthesis. This Shigella boydii serotype 18 (strain CDC 3083-94 / BS512) protein is 2-dehydro-3-deoxyphosphooctonate aldolase.